A 374-amino-acid polypeptide reads, in one-letter code: GPN-loop GTPase 1 (374 aa).

Alanine 2 bears the N-acetylalanine mark. 29–34 is a GTP binding site; that stretch reads GSGKTT. Positions 86–88 match the Gly-Pro-Asn (GPN)-loop; involved in dimer interface motif; that stretch reads GPN. 189 to 192 is a binding site for GTP; sequence NKTD. Residues serine 301, serine 312, and serine 314 each carry the phosphoserine modification. Positions 326–354 are disordered; the sequence is RGTLDEEDEEADSDTDDIDHRVTEESHEE. Threonine 328 bears the Phosphothreonine mark. Acidic residues predominate over residues 330-342; sequence DEEDEEADSDTDD. At serine 338 the chain carries Phosphoserine. Phosphothreonine is present on threonine 340. A compositionally biased stretch (basic and acidic residues) spans 343–354; the sequence is IDHRVTEESHEE.

Belongs to the GPN-loop GTPase family. In terms of assembly, heterodimer with GPN3. Binds to RNA polymerase II (RNAPII). Interacts directly with RNAPII subunits RPB4 and RPB7 and the CTD of RPB1. Interacts with XPA. Expressed ubiquitously.

The protein resides in the cytoplasm. The protein localises to the nucleus. Small GTPase required for proper nuclear import of RNA polymerase II (RNAPII). May act at an RNAP assembly step prior to nuclear import. Forms an interface between the RNA polymerase II enzyme and chaperone/scaffolding proteins, suggesting that it is required to connect RNA polymerase II to regulators of protein complex formation. May be involved in nuclear localization of XPA. This chain is GPN-loop GTPase 1, found in Homo sapiens (Human).